The chain runs to 438 residues: DNA primase DnaG (438 aa).

The region spanning 169-243 (DSIIVVEGRA…DIDYVARAPY (75 aa)) is the Toprim domain. Mg(2+) contacts are provided by Glu-175, Asp-217, and Asp-219.

The protein belongs to the archaeal DnaG primase family. Forms a ternary complex with MCM helicase and DNA. Requires Mg(2+) as cofactor.

It carries out the reaction ssDNA + n NTP = ssDNA/pppN(pN)n-1 hybrid + (n-1) diphosphate.. RNA polymerase that catalyzes the synthesis of short RNA molecules used as primers for DNA polymerase during DNA replication. This chain is DNA primase DnaG, found in Methanococcus maripaludis (strain C5 / ATCC BAA-1333).